The chain runs to 154 residues: Putative pre-16S rRNA nuclease (154 aa).

It belongs to the YqgF nuclease family.

It localises to the cytoplasm. In terms of biological role, could be a nuclease involved in processing of the 5'-end of pre-16S rRNA. The chain is Putative pre-16S rRNA nuclease from Rickettsia canadensis (strain McKiel).